Consider the following 539-residue polypeptide: Phosphatidylinositol 4-phosphate 5-kinase type-1 beta (539 aa).

The segment at 1–21 (MSSTAENGDAVPGKQNEEKTY) is disordered. One can recognise a PIPK domain in the interval 25–395 (ASSAIKGAIQ…RFLKFMNSRV (371 aa)). 3 positions are modified to phosphoserine: Ser445, Ser447, and Ser448.

As to quaternary structure, interacts with RAC1, AJUBA, PLD1, PLD2 and ARF1.

It localises to the cytoplasm. The protein resides in the cytosol. Its subcellular location is the cell membrane. It is found in the endomembrane system. The enzyme catalyses a 1,2-diacyl-sn-glycero-3-phospho-(1D-myo-inositol 4-phosphate) + ATP = a 1,2-diacyl-sn-glycero-3-phospho-(1D-myo-inositol-4,5-bisphosphate) + ADP + H(+). The catalysed reaction is 1-octadecanoyl-2-(5Z,8Z,11Z,14Z)-eicosatetraenoyl-sn-glycero-3-phospho-1D-myo-inositol 4-phosphate + ATP = 1-octadecanoyl-2-(5Z,8Z,11Z,14Z)-eicosatetraenoyl-sn-glycero-3-phospho-1D-myo-inositol 4,5-bisphosphate + ADP + H(+). It catalyses the reaction 1-octadecanoyl-2-(9Z)-octadecenoyl-sn-glycero-3-phospho-1D-myo-inositol 4-phosphate + ATP = 1-octadecanoyl-2-(9Z)-octadecenoyl-sn-glycero-3-phospho-1D-myo-inositol 4,5-bisphosphate + ADP + H(+). It carries out the reaction 1-octadecanoyl-2-(9Z)-octadecenoyl-sn-glycero-3-phospho-1D-myo-inositol + ATP = 1-octadecanoyl-2-(9Z)-octadecenoyl-sn-glycero-3-phospho-1D-myo-inositol 5-phosphate + ADP + H(+). The enzyme catalyses 1-octadecanoyl-2-(9Z,12Z)-octadecadienoyl-sn-glycero-3-phospho-1D-myo-inositol + ATP = 1-octadecanoyl-2-(9Z,12Z)-octadecadienoyl-sn-glycero-3-phospho-1D-myo-inositol 5-phosphate + ADP + H(+). The catalysed reaction is 1-octadecanoyl-2-(5Z,8Z,11Z,14Z-eicosatetraenoyl)-sn-glycero-3-phospho-(1D-myo-inositol) + ATP = 1-octadecanoyl-2-(5Z,8Z,11Z,14Z)-eicosatetraenoyl-sn-glycero-3-phospho-1D-myo-inositol 5-phosphate + ADP + H(+). It catalyses the reaction 1,2-di-(9Z,12Z)-octadecadienoyl-sn-glycero-3-phospho-1D-myo-inositol + ATP = 1,2-di(9Z,12Z)-octadecadienoyl-sn-glycero-3-phospho-1D-myo-inositol 5-phosphate + ADP + H(+). Functionally, catalyzes the phosphorylation of phosphatidylinositol 4-phosphate (PtdIns(4)P/PI4P) to form phosphatidylinositol 4,5-bisphosphate (PtdIns(4,5)P2/PIP2), a lipid second messenger that regulates several cellular processes such as signal transduction, vesicle trafficking, actin cytoskeleton dynamics, cell adhesion, and cell motility. PtdIns(4,5)P2 can directly act as a second messenger or can be utilized as a precursor to generate other second messengers: inositol 1,4,5-trisphosphate (IP3), diacylglycerol (DAG) or phosphatidylinositol-3,4,5-trisphosphate (PtdIns(3,4,5)P3/PIP3). Mediates RAC1-dependent reorganization of actin filaments. Contributes to the activation of phospholipase PLD2. Together with PIP5K1A, is required, after stimulation by G-protein coupled receptors, for the synthesis of IP3 that will induce stable platelet adhesion. The polypeptide is Phosphatidylinositol 4-phosphate 5-kinase type-1 beta (Rattus norvegicus (Rat)).